The following is a 1494-amino-acid chain: MNGGKECDGGDKEGGLPAIQVPVGWQRRVDQNGVLYVSPSGSLLSCLEQVKTYLLTDGTCKCGLECPLILPKVFNFDPGAAVKQRTAEDVKADEDVTKLCIHKRKIIAVATLHKSMEAPHPSLVLTSPGGGTNATPVVPSRAATPRSVRNKSHEGITNSVMPECKNPFKLMIGSSNAMGRLYVQELPGSQQQELHPVYPRQRLGSSEHGQKSPFRGSHGGLPSPASSGSQIYGDGSISPRTDPLGSPDVFTRSNPGFHGAPNSSPIHLNRTPLSPPSVMLHGSPVQSSCAMAGRTNIPLSPTLTTKSPVMKKPMCNFSTNMEIPRAMFHHKPPQGPPPPPPPSCALQKKPLTSEKDPLGILDPIPSKPVNQNPVIINPTSFHSNVHSQVPMMNVSMPPAVVPLPSNLPLPTVKPGHMNHGSHVQRVQHSASTSLSPSPVTSPVHMMGTGIGRIEASPQRSRSSSTSSDHGNFMMPPVGPQATSSGIKVPPRSPRSTIGSPRPSMPSSPSTKSDGHHQYKDIPNPLIAGISNVLNTPSSAAFPTASAGSSSVKSQPGLLGMPLNQILNQHNAASFPASSLLSAAAKAQLANQNKLAGNNSSSSSNSGAVAGSGNTEGHSTLNTMFPPTANMLLPTGEGQSGRAALRDKLMSQQKDALRKRKQPPTTVLSLLRQSQMDSSAVPKPGPDLLRKQGQGSFPISSMSQLLQSMSCQSSHLSSNSTPGCGASNTALPCSANQLHFTDPSMNSSVLQNIPLRGEAVHCHNANTNFVHSNSPVPNHHLAGLINQIQASGNCGMLSQSGMALGNSLHPNPPQSRISTSSTPVIPNSIVSSYNQTSSEAGGSGPSSSIAIAGTNHPAITKTTSVLQDGVIVTTAAGNPLQSQLPIGSDFPFVGQEHALHFPSNSTSNNHLPHPLNPSLLSSLPISLPVNQQHLLNQNLLNILQPSAGEGDMSSINNTLSNHQLTHLQSLLNNNQMFPPNQQQQQLLQGYQNLQAFQGQSTIPCPANNNPMACLFQNFQVRMQEDAALLNKRISTQPGLTALPENPNTTLPPFQDTPCELQPRIDPSLGQQVKDGLVVGGPGDASVDAIYKAVVDAASKGMQVVITTAVNSTTQISPIPALSAMSAFTASIGDPLNLSSAVSAVIHGRNMGGVDHDGRLRNSRGARLPKNLDHGKNVNEGDGFEYFKSASCHTSKKQWDGEQSPRGERNRWKYEEFLDHPGHIHSSPCHERPNNVSTLPFLPGEQHPILLPPRNCPGDKILEENFRYNNYKRTMMSFKERLENTVERCAHINGNRPRQSRGFGELLSTAKQDLVLEEQSPSSSNSLENSLVKDYIHYNGDFNAKSVNGCVPSPSDAKSISSEDDLRNPDSPSSNELIHYRPRTFNVGDLVWGQIKGLTSWPGKLVREDDVHNSCQQSPEEGKVEPEKLKTLTEGLEAYSRVRKRNRKSGKLNNHLEAAIHEAMSELDKMSGTVHQIPQGDRQMRPPKPKRRKISR.

In terms of domain architecture, MBD spans 11–81; sequence DKEGGLPAIQ…KVFNFDPGAA (71 aa). Residues 57–68 form a required for interaction with ASXL1/2/3 region; sequence DGTCKCGLECPL. Disordered stretches follow at residues 123 to 152, 200 to 274, 329 to 350, 450 to 522, 594 to 641, 809 to 848, 1154 to 1173, and 1345 to 1375; these read LVLTSPGGGTNATPVVPSRAATPRSVRNKS, RQRL…TPLS, HHKPPQGPPPPPPPSCALQKKP, IGRI…KDIP, LAGN…QSGR, PNPPQSRISTSSTPVIPNSIVSSYNQTSSEAGGSGPSSSI, HDGRLRNSRGARLPKNLDHG, and VNGCVPSPSDAKSISSEDDLRNPDSPSSNEL. The span at 333–343 shows a compositional bias: pro residues; that stretch reads PQGPPPPPPPS. Low complexity-rich tracts occupy residues 499-511 and 594-612; these read SPRPSMPSSPSTK and LAGNNSSSSSNSGAVAGSG. 2 stretches are compositionally biased toward polar residues: residues 614-624 and 813-835; these read TEGHSTLNTMF and QSRISTSSTPVIPNSIVSSYNQT. Residues 836 to 848 show a composition bias toward low complexity; the sequence is SSEAGGSGPSSSI. The PWWP domain maps to 1385-1409; the sequence is VGDLVWGQIKGLTSWPGKLVREDDV. The segment at 1468 to 1494 is disordered; that stretch reads MSGTVHQIPQGDRQMRPPKPKRRKISR. A compositionally biased stretch (basic residues) spans 1483 to 1494; it reads RPPKPKRRKISR.

In terms of assembly, core component of the polycomb repressive deubiquitinase (PR-DUB) complex, at least composed of BAP1, one of ASXL1, ASXL2 or (probably) ASXL3, and one of MBD5 or MBD6. Distinct combinations of ASXL and MBD proteins may preferentially bind specific histone modification marks. The PR-DUB core associates with a number of accessory proteins, including FOXK1, FOXK2, KDM1B, HCFC1 and OGT; KDM1B specifically associates with ASXL2 PR-DUB complexes. Interacts (via MBD domain) with ASXL1, ASXL2 and ASXL3 (via PHD domain); the interaction is probably direct, mediates association with other PR-DUB complex core components. In terms of tissue distribution, detected in heart, placenta, liver, skeletal muscle, kidney and pancreas.

It localises to the nucleus. It is found in the chromosome. Its function is as follows. Non-catalytic component of the polycomb repressive deubiquitinase (PR-DUB) complex, a complex that specifically mediates deubiquitination of histone H2A monoubiquitinated at 'Lys-120' (H2AK119ub1). Important for stability of PR-DUB components and stimulating its ubiquitinase activity. As part of the PR-DUB complex, associates with chromatin enriched in histone marks H3K4me1, H3K4me3, and H3K27Ac, but not in H3K27me3. The PR-DUB complex is an epigenetic regulator of gene expression, including genes involved in cell growth and survivability. MBD5 and MBD6 containing complexes associate with distinct chromatin regions enriched in genes involved in different pathways. Heterochromatin recruitment is not mediated by DNA methylation. The PR-DUB complex is an epigenetic regulator of gene expression, including genes involved in development, cell communication, signaling, cell proliferation and cell viability. The sequence is that of Methyl-CpG-binding domain protein 5 (MBD5) from Homo sapiens (Human).